Here is a 62-residue protein sequence, read N- to C-terminus: Photosystem II reaction center protein Z (62 aa).

The next 2 helical transmembrane spans lie at Val-8–Ala-28 and Tyr-41–Val-61.

Belongs to the PsbZ family. PSII is composed of 1 copy each of membrane proteins PsbA, PsbB, PsbC, PsbD, PsbE, PsbF, PsbH, PsbI, PsbJ, PsbK, PsbL, PsbM, PsbT, PsbX, PsbY, PsbZ, Psb30/Ycf12, peripheral proteins PsbO, CyanoQ (PsbQ), PsbU, PsbV and a large number of cofactors. It forms dimeric complexes.

The protein localises to the cellular thylakoid membrane. In terms of biological role, may control the interaction of photosystem II (PSII) cores with the light-harvesting antenna, regulates electron flow through the 2 photosystem reaction centers. PSII is a light-driven water plastoquinone oxidoreductase, using light energy to abstract electrons from H(2)O, generating a proton gradient subsequently used for ATP formation. The polypeptide is Photosystem II reaction center protein Z (Crocosphaera subtropica (strain ATCC 51142 / BH68) (Cyanothece sp. (strain ATCC 51142))).